The chain runs to 373 residues: Alanine racemase (373 aa).

Residue Lys-37 is the Proton acceptor; specific for D-alanine of the active site. Lys-37 bears the N6-(pyridoxal phosphate)lysine mark. Position 135 (Arg-135) interacts with substrate. The active-site Proton acceptor; specific for L-alanine is Tyr-266. Met-313 is a substrate binding site.

It belongs to the alanine racemase family. The cofactor is pyridoxal 5'-phosphate.

It carries out the reaction L-alanine = D-alanine. Its pathway is amino-acid biosynthesis; D-alanine biosynthesis; D-alanine from L-alanine: step 1/1. Functionally, catalyzes the interconversion of L-alanine and D-alanine. This organism is able to use both L- and D-alanine as a nitrogen source. May also prevent D-alanine from interfering with the use of L-alanine. This is Alanine racemase (alr) from Methanococcus maripaludis (strain DSM 14266 / JCM 13030 / NBRC 101832 / S2 / LL).